A 454-amino-acid polypeptide reads, in one-letter code: Repulsive guidance molecule A (454 aa).

Positions 1-47 are cleaved as a signal peptide; it reads MQPPRERLVVTGRAGWMGMGRGAGRSALGLWPTLAFLLCSFPAAISP. Positions 48 to 169 are cleaved as a propeptide — removed in mature form; it reads CKILKCNSEF…NYTHCGLFGD (122 aa). Polar residues predominate over residues 114 to 126; the sequence is HNCSKDGPTSQPR. The interval 114–141 is disordered; it reads HNCSKDGPTSQPRVRTLPPAGDSQERSD. N-linked (GlcNAc...) asparagine glycans are attached at residues Asn115 and Asn160. 2 disulfide bridges follow: Cys146/Cys227 and Cys164/Cys316. Asn388 is a glycosylation site (N-linked (GlcNAc...) asparagine). Ala427 is lipidated: GPI-anchor amidated alanine. The propeptide at 428–454 is removed in mature form; the sequence is AAATTFPLAPQILLGTIPLLVLLPVLW.

This sequence belongs to the repulsive guidance molecule (RGM) family. In terms of assembly, interacts with NEO1, BMP2 and BMP4. Post-translationally, autocatalytically cleaved at low pH; the two chains remain linked via two disulfide bonds. In terms of tissue distribution, expressed in gradient in periventricular layers of the developing nervous system. In adult, expressed in scattered cells throughout the brain.

Its subcellular location is the cell membrane. In terms of biological role, member of the repulsive guidance molecule (RGM) family that performs several functions in the developing and adult nervous system. Regulates cephalic neural tube closure, inhibits neurite outgrowth and cortical neuron branching, and the formation of mature synapses. Binding to its receptor NEO1/neogenin induces activation of RHOA-ROCK1/Rho-kinase signaling pathway through UNC5B-ARHGEF12/LARG-PTK2/FAK1 cascade, leading to collapse of the neuronal growth cone and neurite outgrowth inhibition. Furthermore, RGMA binding to NEO1/neogenin leads to HRAS inactivation by influencing HRAS-PTK2/FAK1-AKT1 pathway. It also functions as a bone morphogenetic protein (BMP) coreceptor that may signal through SMAD1, SMAD5, and SMAD8. The sequence is that of Repulsive guidance molecule A (Rgma) from Mus musculus (Mouse).